Consider the following 258-residue polypeptide: Methionine aminopeptidase (258 aa).

His84 provides a ligand contact to substrate. Residues Asp102, Asp113, and His176 each coordinate a divalent metal cation. His183 lines the substrate pocket. Positions 211 and 242 each coordinate a divalent metal cation.

The protein belongs to the peptidase M24A family. Methionine aminopeptidase type 1 subfamily. As to quaternary structure, monomer. The cofactor is Co(2+). It depends on Zn(2+) as a cofactor. Mn(2+) serves as cofactor. Fe(2+) is required as a cofactor.

It catalyses the reaction Release of N-terminal amino acids, preferentially methionine, from peptides and arylamides.. Removes the N-terminal methionine from nascent proteins. The N-terminal methionine is often cleaved when the second residue in the primary sequence is small and uncharged (Met-Ala-, Cys, Gly, Pro, Ser, Thr, or Val). Requires deformylation of the N(alpha)-formylated initiator methionine before it can be hydrolyzed. The chain is Methionine aminopeptidase from Aquifex aeolicus (strain VF5).